We begin with the raw amino-acid sequence, 178 residues long: Caveolin-1 (178 aa).

Position 2 is an N-acetylserine (S2). The residue at position 2 (S2) is a Phosphoserine. Residues 2 to 94 are required for homooligomerization; it reads SGGKYVDSEG…WKASFTTFTV (93 aa). Over 2–104 the chain is Cytoplasmic; sequence SGGKYVDSEG…TKYWFYRLLS (103 aa). An N6-acetyllysine; alternate modification is found at K5. K5 is covalently cross-linked (Glycyl lysine isopeptide (Lys-Gly) (interchain with G-Cter in ubiquitin); alternate). The residue at position 6 (Y6) is a Phosphotyrosine. At S9 the chain carries Phosphoserine. Y14 bears the Phosphotyrosine; by ABL1 mark. Y25 carries the phosphotyrosine modification. Residues K26, K39, K47, and K57 each participate in a glycyl lysine isopeptide (Lys-Gly) (interchain with G-Cter in ubiquitin) cross-link. Positions 82–94 are interaction with CAVIN3; the sequence is DGIWKASFTTFTV. The helical intramembrane region spans 105-125; that stretch reads ALFGIPMALIWGIYFAILSFL. The Cytoplasmic segment spans residues 126–178; it reads HIWAVVPCIKSFLIEIQCISRVYSIYVHTFCDPLFEAIGKIFSSIRINMQKEI. An interacts with SPRY1, SPRY2, SPRY3 and SPRY4 region spans residues 131-142; that stretch reads VPCIKSFLIEIQ. 3 S-palmitoyl cysteine lipidation sites follow: C133, C143, and C156. The interval 149–160 is interacts with SPRY1, SPRY2, and SPRY4; sequence SIYVHTFCDPLF. An interacts with SPRY1, SPRY2, SPRY3 and SPRY4 region spans residues 167–178; it reads FSSIRINMQKEI.

The protein belongs to the caveolin family. Homooligomer. Interacts with GLIPR2. Interacts with NOSTRIN. Interacts with SNAP25 and STX1A. Interacts (via the N-terminus) with DPP4; the interaction is direct. Interacts with CTNNB1, CDH1 and JUP. Interacts with PACSIN2; this interaction induces membrane tubulation. Interacts with SLC7A9. Interacts with BMX and BTK. Interacts with TGFBR1. Interacts with CAVIN3 (via leucine-zipper domain) in a cholesterol-sensitive manner. Interacts with CAVIN1. Interacts with EHD2 in a cholesterol-dependent manner. Forms a ternary complex with UBXN6 and VCP; mediates CAV1 targeting to lysosomes for degradation. Interacts with ABCG1; this interaction regulates ABCG1-mediated cholesterol efflux. Interacts with NEU3; this interaction enhances NEU3 sialidase activity within caveola. Interacts (via C-terminus) with SPRY1, SPRY2 (via C-terminus), SPRY3, and SPRY4. Interacts with IGFBP5; this interaction allows trafficking of IGFBP5 from the plasma membrane to the nucleus. Post-translationally, phosphorylated at Tyr-14 by ABL1 in response to oxidative stress. In terms of processing, ubiquitinated. Undergo monoubiquitination and multi- and/or polyubiquitination. Monoubiquitination of N-terminal lysines promotes integration in a ternary complex with UBXN6 and VCP which promotes oligomeric CAV1 targeting to lysosomes for degradation. Ubiquitinated by ZNRF1; leading to degradation and modulation of the TLR4-mediated immune response.

It is found in the golgi apparatus membrane. It localises to the cell membrane. The protein localises to the membrane. Its subcellular location is the caveola. The protein resides in the membrane raft. Its function is as follows. May act as a scaffolding protein within caveolar membranes. Forms a stable heterooligomeric complex with CAV2 that targets to lipid rafts and drives caveolae formation. Mediates the recruitment of CAVIN proteins (CAVIN1/2/3/4) to the caveolae. Interacts directly with G-protein alpha subunits and can functionally regulate their activity. Involved in the costimulatory signal essential for T-cell receptor (TCR)-mediated T-cell activation. Its binding to DPP4 induces T-cell proliferation and NF-kappa-B activation in a T-cell receptor/CD3-dependent manner. Recruits CTNNB1 to caveolar membranes and may regulate CTNNB1-mediated signaling through the Wnt pathway. Negatively regulates TGFB1-mediated activation of SMAD2/3 by mediating the internalization of TGFBR1 from membrane rafts leading to its subsequent degradation. Binds 20(S)-hydroxycholesterol (20(S)-OHC). The chain is Caveolin-1 (CAV1) from Loxodonta africana (African elephant).